Consider the following 457-residue polypeptide: MDHLPIFCQLRDRDCLIVGGGDVAERKARLLLDAGARLTVNALAFIPQFTAWADAGMLTLVEGPFDESLLDTCWLAIAATDDDALNQRVSEAAEAHRIFCNVVDAPKAASFIMPSIIDRSPLMVAVSSGGTSPVLARLLREKLESLLPLHLGQVAKYAGQLRGRVKQQFATMGERRRFWEKLFVNDRLAQSLANNDQKAITETTEQLINEPLDHRGEVVLVGAGPGDAGLLTLKGLQQIQQADVVVYDRLVSDDIMNLVRRDADRVFVGKRAGYHCVPQEEINQILLREAQKGKRVVRLKGGDPFIFGRGGEELETLCNAGIPFSVVPGITAASGCSAYSGIPLTHRDYAQSVRLITGHLKTGGELDWENLAAEKQTLVFYMGLNQAATIQQKLIEHGMPGEMPVAIVENGTAVTQRVIDGTLTQLGELAQQMNSPSLIIIGRVVGLRDKLNWFSNH.

Residues methionine 1 to threonine 204 form a precorrin-2 dehydrogenase /sirohydrochlorin ferrochelatase region. Residues aspartate 22–valine 23 and leucine 43–alanine 44 contribute to the NAD(+) site. Position 128 is a phosphoserine (serine 128). Residues glycine 216–histidine 457 form a uroporphyrinogen-III C-methyltransferase region. An S-adenosyl-L-methionine-binding site is contributed by proline 225. Aspartate 248 functions as the Proton acceptor in the catalytic mechanism. Lysine 270 acts as the Proton donor in catalysis. S-adenosyl-L-methionine-binding positions include glycine 301–aspartate 303, isoleucine 306, threonine 331–alanine 332, methionine 382, and glycine 411.

In the N-terminal section; belongs to the precorrin-2 dehydrogenase / sirohydrochlorin ferrochelatase family. It in the C-terminal section; belongs to the precorrin methyltransferase family.

It catalyses the reaction uroporphyrinogen III + 2 S-adenosyl-L-methionine = precorrin-2 + 2 S-adenosyl-L-homocysteine + H(+). The enzyme catalyses precorrin-2 + NAD(+) = sirohydrochlorin + NADH + 2 H(+). It carries out the reaction siroheme + 2 H(+) = sirohydrochlorin + Fe(2+). It participates in cofactor biosynthesis; adenosylcobalamin biosynthesis; precorrin-2 from uroporphyrinogen III: step 1/1. It functions in the pathway cofactor biosynthesis; adenosylcobalamin biosynthesis; sirohydrochlorin from precorrin-2: step 1/1. Its pathway is porphyrin-containing compound metabolism; siroheme biosynthesis; precorrin-2 from uroporphyrinogen III: step 1/1. The protein operates within porphyrin-containing compound metabolism; siroheme biosynthesis; siroheme from sirohydrochlorin: step 1/1. It participates in porphyrin-containing compound metabolism; siroheme biosynthesis; sirohydrochlorin from precorrin-2: step 1/1. Multifunctional enzyme that catalyzes the SAM-dependent methylations of uroporphyrinogen III at position C-2 and C-7 to form precorrin-2 via precorrin-1. Then it catalyzes the NAD-dependent ring dehydrogenation of precorrin-2 to yield sirohydrochlorin. Finally, it catalyzes the ferrochelation of sirohydrochlorin to yield siroheme. This is Siroheme synthase from Escherichia coli O17:K52:H18 (strain UMN026 / ExPEC).